Consider the following 567-residue polypeptide: MLLAQINRDSQAMAEFPGGGGEAQHVTLCLTEAVADGESMDTMEGMSLQAVTLADGSTAYIQHNTKDGKLMEGQVIQLEDGSAAYVQHVPKGDDLSLEDGQAVQLEDGTTAYIHHSSKDSYDQSSVQAVQLEDGTTAYIHHAVQVPQSDTILAIQADGTVAGLHTGEASIDPDTISALEQYAAKVSIEGGEGAGSNALINESESEKKMQIVLSHGSRIPAKPPQTNEKAFRCDYEGCGKLYTTAHHLKVHERSHTGDRPYQCDHGGCRKAFATGYGLKSHVRTHTGEKPYRCSEENCTKSFKTSGDLQKHVRTHTGERPFKCPFEGCGRSFTTSNIRKVHIRTHTGERPYYCSEPGCGRAFASATNYKNHVRIHTGEKPYVCTVPGCDKRFTEYSSLYKHHVVHTHSKPYNCNHCGKTYKQISTLAMHKRTAHNDTEPIEEEQESFFVPQPPDEVIKGSQITYVTGVDGEDGIQTTQSGQQLALIAQDGTSHVAIVAQDLSAFHTSATESGPQHSHNLGGSESRPVTLLATSNGRQIAVQIGEQQSLEEAIRIASRIQQGESPGIED.

7 consecutive C2H2-type zinc fingers follow at residues 230-254 (FRCD…ERSH), 260-284 (YQCD…VRTH), 290-314 (YRCS…VRTH), 320-344 (FKCP…IRTH), 350-374 (YYCS…VRIH), 380-404 (YVCT…HVVH), and 410-433 (YNCN…RTAH). Residues 506 to 520 (SATESGPQHSHNLGG) show a composition bias toward polar residues. Positions 506–525 (SATESGPQHSHNLGGSESRP) are disordered.

The protein belongs to the GLI C2H2-type zinc-finger protein family.

Its subcellular location is the nucleus. In terms of biological role, transcriptional activator. Activates the gene for selenocysteine tRNA (tRNAsec). Binds to the activator element (AE) motif of the selenocysteine tRNA gene promoter. In Xenopus tropicalis (Western clawed frog), this protein is Zinc finger protein 143 (znf143).